The following is a 1066-amino-acid chain: Coiled-coil domain-containing protein 73 (1066 aa).

Coiled-coil stretches lie at residues 47–134 (KAET…QVSQ) and 178–391 (LVRE…KTEE). Disordered stretches follow at residues 568–600 (LDTRSNKASSNGMSNEMAHKRNYNTDGSESNPF), 719–811 (SENS…PKSG), 854–883 (LSPATPSADSVSTSARSAFDLPSPDKPEKT), 944–978 (KNIESDPTSNSRAADTMSNWSIHLDPKGQPREERN), and 1003–1027 (VQQSHSQTVKVTDSPDPLTFSPGNN). 5 stretches are compositionally biased toward polar residues: residues 591–600 (NTDGSESNPF), 742–781 (RTNTNDIQNSSLRNHLGASESSVSVSDFQVNQGDSHTSQA), 789–811 (PLTTSSEKQPPSESQITETPKSG), 857–869 (ATPSADSVSTSAR), and 948–964 (SDPTSNSRAADTMSNWS). The segment covering 967–978 (LDPKGQPREERN) has biased composition (basic and acidic residues). A compositionally biased stretch (polar residues) spans 1003–1013 (VQQSHSQTVKV).

This chain is Coiled-coil domain-containing protein 73 (Ccdc73), found in Mus musculus (Mouse).